A 581-amino-acid chain; its full sequence is CUE domain-containing protein 3 (581 aa).

Positions 271-314 (INPGDVKSLIELFPQLSVEEAVEHLSASLGNIDAACESVITSSL) constitute a CUE domain. A Phosphotyrosine modification is found at Tyr386. 2 disordered regions span residues 422-448 (DDTY…ASSK) and 522-581 (GSGN…SNEK). Polar residues predominate over residues 522–542 (GSGNTNIGSLRQTKFKQSNYT). Over residues 552 to 581 (QHRPSRPSKNPSLKKKKYVRTKPKKASNEK) the composition is skewed to basic residues.

As to quaternary structure, component of the RQT (ribosome quality control trigger) complex.

It localises to the cytoplasm. The protein localises to the nucleus. In terms of biological role, involved in activation of the ribosome quality control (RQC) pathway, a pathway that degrades nascent peptide chains during problematic translation. Specifically recognizes and binds RPS20/uS10 ubiquitinated by HEL2, promoting recruitment of the RQT (ribosome quality control trigger) complex on stalled ribosomes, followed by disassembly of stalled ribosomes. This chain is CUE domain-containing protein 3, found in Schizosaccharomyces pombe (strain 972 / ATCC 24843) (Fission yeast).